We begin with the raw amino-acid sequence, 519 residues long: ATP synthase subunit alpha (519 aa).

174–181 is an ATP binding site; sequence GDRQTGKT.

This sequence belongs to the ATPase alpha/beta chains family. As to quaternary structure, F-type ATPases have 2 components, CF(1) - the catalytic core - and CF(0) - the membrane proton channel. CF(1) has five subunits: alpha(3), beta(3), gamma(1), delta(1), epsilon(1). CF(0) has three main subunits: a(1), b(2) and c(9-12). The alpha and beta chains form an alternating ring which encloses part of the gamma chain. CF(1) is attached to CF(0) by a central stalk formed by the gamma and epsilon chains, while a peripheral stalk is formed by the delta and b chains.

The protein resides in the cell inner membrane. The catalysed reaction is ATP + H2O + 4 H(+)(in) = ADP + phosphate + 5 H(+)(out). Produces ATP from ADP in the presence of a proton gradient across the membrane. The alpha chain is a regulatory subunit. The polypeptide is ATP synthase subunit alpha (Paracidovorax citrulli (strain AAC00-1) (Acidovorax citrulli)).